Here is a 197-residue protein sequence, read N- to C-terminus: MKLIVGMTGATCAPLGVALLQALREMPNVETHLVMSKWAKTTIELETPYSARDVAALADFSHNPADQAAIISSGSFRTDGMIVIPCSMKTLAGIRAGYADGLVGRAADVVLKEGRKLVLVPREMPLSTIHLENMLALSRMGVAMVPPMPAFYNHPETVDDIVHHVVARVLDQFGLEHPHARRWQGLPQARNFSQENE.

Residues 9 to 11 (GAT), serine 36, 87 to 90 (SMKT), and arginine 122 contribute to the FMN site.

This sequence belongs to the UbiX/PAD1 family. YclB subfamily. Homododecamer.

It catalyses the reaction dimethylallyl phosphate + FMNH2 = prenylated FMNH2 + phosphate. Functionally, flavin prenyltransferase that catalyzes the synthesis of the prenylated FMN cofactor (prenyl-FMN) for phenolic acid decarboxylase C. Involved in the decarboxylation and detoxification of phenolic derivatives under both aerobic and anaerobic conditions. The chain is Probable UbiX-like flavin prenyltransferase (ecdB) from Escherichia coli O111:H-.